The chain runs to 112 residues: CLAVATA3/ESR (CLE)-related protein 44 (112 aa).

The first 39 residues, 1–39 (MATTIDQTSIKSLHFHQVIRLIITIIFLAFLFLIGPTSS), serve as a signal peptide directing secretion. A disordered region spans residues 41 to 112 (NHHLHESSSK…VPSGPNPISN (72 aa)). Residues 62-71 (QPSTPSSSTM) show a composition bias toward polar residues. Hydroxyproline is present on residues P104 and P107. P107 carries O-linked (Ara...) hydroxyproline glycosylation.

Belongs to the CLV3/ESR signal peptide family. As to quaternary structure, interacts specifically with the leucine-rich repeat receptor-like protein kinase TDR, especially in the presence of SERK2. In terms of processing, the O-glycosylation (arabinosylation) of the hydroxyproline Pro-107 enhances binding affinity of the CLE44p peptide for its receptor. Mostly expressed in flowers and leaves. Widely expressed along the vascular strands. In roots and hypocotyls, present in endodermal cells as well as cells in the phloem and the adjacent pericycle.

The protein resides in the secreted. It is found in the extracellular space. Functionally, extracellular signal peptide that regulates cell fate. May act with TDR as a ligand-receptor pair in a signal transduction pathway that represses tracheary element differentiation but promotes the formation of procambial cells adjacent to phloem cells in the veins. Regulates the transition of protophloem cells from proliferation to differentiation, thus impinging on postembryonic growth capacity of the root meristem; this signaling pathway requires CRN and CLV2. The chain is CLAVATA3/ESR (CLE)-related protein 44 from Arabidopsis thaliana (Mouse-ear cress).